The chain runs to 97 residues: Nucleoid-associated protein HPP12_0031 (97 aa).

This sequence belongs to the YbaB/EbfC family. As to quaternary structure, homodimer.

It localises to the cytoplasm. The protein localises to the nucleoid. Binds to DNA and alters its conformation. May be involved in regulation of gene expression, nucleoid organization and DNA protection. The protein is Nucleoid-associated protein HPP12_0031 of Helicobacter pylori (strain P12).